Here is a 408-residue protein sequence, read N- to C-terminus: Imidazolonepropionase (408 aa).

The Fe(3+) site is built by His73 and His75. Residues His73 and His75 each contribute to the Zn(2+) site. 4-imidazolone-5-propanoate is bound by residues Arg82, Tyr145, and His178. Tyr145 contributes to the N-formimidoyl-L-glutamate binding site. His243 is a Fe(3+) binding site. His243 is a Zn(2+) binding site. Residue Gln246 coordinates 4-imidazolone-5-propanoate. Asp318 is a binding site for Fe(3+). A Zn(2+)-binding site is contributed by Asp318. N-formimidoyl-L-glutamate contacts are provided by Asn320 and Gly322. A 4-imidazolone-5-propanoate-binding site is contributed by Ser323.

This sequence belongs to the metallo-dependent hydrolases superfamily. HutI family. Requires Zn(2+) as cofactor. The cofactor is Fe(3+).

It is found in the cytoplasm. The enzyme catalyses 4-imidazolone-5-propanoate + H2O = N-formimidoyl-L-glutamate. It participates in amino-acid degradation; L-histidine degradation into L-glutamate; N-formimidoyl-L-glutamate from L-histidine: step 3/3. Functionally, catalyzes the hydrolytic cleavage of the carbon-nitrogen bond in imidazolone-5-propanoate to yield N-formimidoyl-L-glutamate. It is the third step in the universal histidine degradation pathway. The sequence is that of Imidazolonepropionase from Shewanella sp. (strain W3-18-1).